The sequence spans 609 residues: UvrABC system protein C (609 aa).

Positions 16–94 (SSPGVYRMYD…IKQYMPKYNV (79 aa)) constitute a GIY-YIG domain. In terms of domain architecture, UVR spans 203-238 (QQVTKALVAKMEQAAVELNYEQAARYRDQITALRRV).

The protein belongs to the UvrC family. As to quaternary structure, interacts with UvrB in an incision complex.

The protein localises to the cytoplasm. The UvrABC repair system catalyzes the recognition and processing of DNA lesions. UvrC both incises the 5' and 3' sides of the lesion. The N-terminal half is responsible for the 3' incision and the C-terminal half is responsible for the 5' incision. The chain is UvrABC system protein C from Shewanella piezotolerans (strain WP3 / JCM 13877).